A 348-amino-acid polypeptide reads, in one-letter code: Alanine racemase (348 aa).

Catalysis depends on lysine 34, which acts as the Proton acceptor; specific for D-alanine. At lysine 34 the chain carries N6-(pyridoxal phosphate)lysine. Arginine 127 contributes to the substrate binding site. Tyrosine 243 functions as the Proton acceptor; specific for L-alanine in the catalytic mechanism. Methionine 291 contributes to the substrate binding site.

This sequence belongs to the alanine racemase family. Pyridoxal 5'-phosphate serves as cofactor.

It carries out the reaction L-alanine = D-alanine. Its pathway is amino-acid biosynthesis; D-alanine biosynthesis; D-alanine from L-alanine: step 1/1. Functionally, catalyzes the interconversion of L-alanine and D-alanine. May also act on other amino acids. This is Alanine racemase (alr) from Coprothermobacter proteolyticus (strain ATCC 35245 / DSM 5265 / OCM 4 / BT).